The primary structure comprises 401 residues: Serine/threonine transporter SstT (401 aa).

Helical transmembrane passes span 17 to 37, 40 to 60, 78 to 98, 138 to 158, 179 to 199, 212 to 232, 295 to 315, and 336 to 356; these read IGIG…ITVI, FGSL…LTLV, VICL…GASY, ALAT…GLAF, VVGW…FDTI, LLLL…NPLI, MAGA…TLGI, and ASGV…LFGI.

Belongs to the dicarboxylate/amino acid:cation symporter (DAACS) (TC 2.A.23) family.

The protein localises to the cell membrane. The enzyme catalyses L-serine(in) + Na(+)(in) = L-serine(out) + Na(+)(out). The catalysed reaction is L-threonine(in) + Na(+)(in) = L-threonine(out) + Na(+)(out). Its function is as follows. Involved in the import of serine and threonine into the cell, with the concomitant import of sodium (symport system). This Streptococcus suis (strain 98HAH33) protein is Serine/threonine transporter SstT.